The following is a 186-amino-acid chain: Lumazine protein (186 aa).

Lumazine-binding repeat units follow at residues 1 to 96 (MFRG…VGRG) and 97 to 186 (GLTG…LNEW).

Requires 6,7-dimethyl-8-(1-D-ribityl)lumazine as cofactor.

Antenna protein that modulates the color of the bioluminescence emission of the luciferase. In the presence of LumP, luciferase emission is shifted to higher energy values (shorter wavelength). This Photobacterium leiognathi protein is Lumazine protein (lumP).